Consider the following 1070-residue polypeptide: DNA-directed RNA polymerase subunit beta (1070 aa).

The protein belongs to the RNA polymerase beta chain family. In terms of assembly, in plastids the minimal PEP RNA polymerase catalytic core is composed of four subunits: alpha, beta, beta', and beta''. When a (nuclear-encoded) sigma factor is associated with the core the holoenzyme is formed, which can initiate transcription.

The protein localises to the plastid. Its subcellular location is the chloroplast. It carries out the reaction RNA(n) + a ribonucleoside 5'-triphosphate = RNA(n+1) + diphosphate. Its function is as follows. DNA-dependent RNA polymerase catalyzes the transcription of DNA into RNA using the four ribonucleoside triphosphates as substrates. The chain is DNA-directed RNA polymerase subunit beta from Solanum lycopersicum (Tomato).